Reading from the N-terminus, the 155-residue chain is MRHANKRGAARLAAVQALYQMDVAGSGVFEITAEYEAFRLGKEVDGALYREADAQWFRAILTGVVEDQKTIDPVIRQALTDDWPLSRLDSTLRAILRAGVYELMKREDVPVAVIVSEYVDIAKAFYEEDEPKLVNAVLDRVSRRVRGEGRGKDAS.

Belongs to the NusB family.

Its function is as follows. Involved in transcription antitermination. Required for transcription of ribosomal RNA (rRNA) genes. Binds specifically to the boxA antiterminator sequence of the ribosomal RNA (rrn) operons. This Mesorhizobium japonicum (strain LMG 29417 / CECT 9101 / MAFF 303099) (Mesorhizobium loti (strain MAFF 303099)) protein is Transcription antitermination protein NusB.